The following is a 941-amino-acid chain: Pre-mRNA-processing factor 6 (941 aa).

Residues 1-79 form a disordered region; it reads MNKKKKPFLG…DEDLNDTNYD (79 aa). A compositionally biased stretch (basic and acidic residues) spans 39–65; the sequence is DANDPVDDRHAPPGKRTVGDQMKKNQA. The segment covering 66 to 78 has biased composition (acidic residues); that stretch reads ADDDDEDLNDTNY. Ser-143 is modified (phosphoserine). Phosphothreonine occurs at positions 180, 266, and 275. Residue Ser-279 is modified to Phosphoserine. HAT repeat units follow at residues 384–416, 418–444, 445–476, 554–586, 588–620, 622–654, 689–721, 723–755, and 855–887; these read TDIR…LEEP, DARI…ARLE, TYEN…LEEA, NALE…FGKN, GTRE…SKWL, GDVP…LESE, DNIR…IEEQ, EMME…LEEK, and RKIT…FELQ.

In terms of assembly, identified in the spliceosome B complex. Identified in the spliceosome C complex. Associates with the U5 snRNP particle. Component of the U4/U6-U5 tri-snRNP complex composed of the U4, U6 and U5 snRNAs and at least PRPF3, PRPF4, PRPF6, PRPF8, PRPF31, SNRNP200, TXNL4A, SNRNP40, DDX23, CD2BP2, PPIH, SNU13, EFTUD2, SART1 and USP39, LSm proteins LSm2-8 and Sm proteins. Interacts with ARAF1. Interacts with AR and NR3C1, but not ESR1, independently of the presence of hormones. Interacts with USH1G. Phosphorylated by PRP4K during spliceosome assembly.

It is found in the nucleus. The protein resides in the nucleoplasm. The protein localises to the nucleus speckle. In terms of biological role, involved in pre-mRNA splicing as component of the U4/U6-U5 tri-snRNP complex, one of the building blocks of the spliceosome. Enhances dihydrotestosterone-induced transactivation activity of AR, as well as dexamethasone-induced transactivation activity of NR3C1, but does not affect estrogen-induced transactivation. This Pongo abelii (Sumatran orangutan) protein is Pre-mRNA-processing factor 6 (PRPF6).